The sequence spans 177 residues: Transcription factor E (177 aa).

The HTH TFE/IIEalpha-type domain occupies 9 to 91; the sequence is VEELLNELVG…YWRINYDKAL (83 aa).

This sequence belongs to the TFE family. Monomer. Interaction with RNA polymerase subunits RpoF and RpoE is necessary for Tfe stimulatory transcription activity. Able to interact with Tbp and RNA polymerase in the absence of DNA promoter. Interacts both with the preinitiation and elongation complexes.

Its function is as follows. Transcription factor that plays a role in the activation of archaeal genes transcribed by RNA polymerase. Facilitates transcription initiation by enhancing TATA-box recognition by TATA-box-binding protein (Tbp), and transcription factor B (Tfb) and RNA polymerase recruitment. Not absolutely required for transcription in vitro, but particularly important in cases where Tbp or Tfb function is not optimal. It dynamically alters the nucleic acid-binding properties of RNA polymerases by stabilizing the initiation complex and destabilizing elongation complexes. Seems to translocate with the RNA polymerase following initiation and acts by binding to the non template strand of the transcription bubble in elongation complexes. The protein is Transcription factor E of Archaeoglobus fulgidus (strain ATCC 49558 / DSM 4304 / JCM 9628 / NBRC 100126 / VC-16).